The sequence spans 357 residues: Sulfate/thiosulfate import ATP-binding protein CysA (357 aa).

The ABC transporter domain occupies I3–L237. Residue G35–T42 coordinates ATP.

The protein belongs to the ABC transporter superfamily. Sulfate/tungstate importer (TC 3.A.1.6) family. In terms of assembly, the complex is composed of two ATP-binding proteins (CysA), two transmembrane proteins (CysT and CysW) and a solute-binding protein (CysP).

The protein localises to the cell membrane. It catalyses the reaction sulfate(out) + ATP + H2O = sulfate(in) + ADP + phosphate + H(+). It carries out the reaction thiosulfate(out) + ATP + H2O = thiosulfate(in) + ADP + phosphate + H(+). Functionally, part of the ABC transporter complex CysAWTP involved in sulfate/thiosulfate import. Responsible for energy coupling to the transport system. The sequence is that of Sulfate/thiosulfate import ATP-binding protein CysA from Halalkalibacterium halodurans (strain ATCC BAA-125 / DSM 18197 / FERM 7344 / JCM 9153 / C-125) (Bacillus halodurans).